The following is a 104-amino-acid chain: Integration host factor subunit beta (104 aa).

The protein belongs to the bacterial histone-like protein family. Heterodimer of an alpha and a beta chain.

Its function is as follows. This protein is one of the two subunits of integration host factor, a specific DNA-binding protein that functions in genetic recombination as well as in transcriptional and translational control. The sequence is that of Integration host factor subunit beta from Chromobacterium violaceum (strain ATCC 12472 / DSM 30191 / JCM 1249 / CCUG 213 / NBRC 12614 / NCIMB 9131 / NCTC 9757 / MK).